A 219-amino-acid chain; its full sequence is Leukocyte surface antigen CD53 (219 aa).

Residues 2 to 11 are Cytoplasmic-facing; the sequence is GMSSLKLLKY. The chain crosses the membrane as a helical span at residues 12–32; that stretch reads VLFFFNFLFWVCGCCILGFGI. Topologically, residues 33–54 are extracellular; that stretch reads HLLVQNTYGILFRNLPFLTLGN. A helical membrane pass occupies residues 55–69; sequence VLVIVGSIIMVVAFL. Over 70–80 the chain is Cytoplasmic; sequence GCMGSIKENKC. The chain crosses the membrane as a helical span at residues 81–106; it reads LLMSFFVLLLLILLAEVTLAILLFVY. Topologically, residues 107-181 are extracellular; sequence EKKINTLVAE…KKGQAWFHSN (75 aa). N-linked (GlcNAc...) asparagine glycosylation is found at Asn-119, Asn-129, and Asn-148. The chain crosses the membrane as a helical span at residues 182-206; that stretch reads FLYIGIVTICVCVIQVLGMSFALTL. Topologically, residues 207-219 are cytoplasmic; that stretch reads NCQIDKTSQALGL.

This sequence belongs to the tetraspanin (TM4SF) family. As to quaternary structure, interacts with SCIMP. Interacts with CD45/PTPRC. Interacts with IL7R. Interacts with RBL2 and PPP2CA. Spleen and thymus, B-cells, monocytes, macrophages, neutrophils, single (CD4 or CD8) positive thymocytes, peripheral T-cells.

The protein localises to the cell membrane. It is found in the cell junction. Its subcellular location is the membrane. Its function is as follows. Required for efficient formation of myofibers in regenerating muscle at the level of cell fusion. May be involved in growth regulation in hematopoietic cells. This chain is Leukocyte surface antigen CD53 (Cd53), found in Rattus norvegicus (Rat).